Reading from the N-terminus, the 196-residue chain is ATP-dependent Clp protease proteolytic subunit 1 (196 aa).

Residue Ser96 is the Nucleophile of the active site. The active site involves His121.

The protein belongs to the peptidase S14 family. As to quaternary structure, fourteen ClpP subunits assemble into 2 heptameric rings which stack back to back to give a disk-like structure with a central cavity, resembling the structure of eukaryotic proteasomes.

The protein resides in the cytoplasm. It catalyses the reaction Hydrolysis of proteins to small peptides in the presence of ATP and magnesium. alpha-casein is the usual test substrate. In the absence of ATP, only oligopeptides shorter than five residues are hydrolyzed (such as succinyl-Leu-Tyr-|-NHMec, and Leu-Tyr-Leu-|-Tyr-Trp, in which cleavage of the -Tyr-|-Leu- and -Tyr-|-Trp bonds also occurs).. Functionally, cleaves peptides in various proteins in a process that requires ATP hydrolysis. Has a chymotrypsin-like activity. Plays a major role in the degradation of misfolded proteins. This Prochlorococcus marinus (strain SARG / CCMP1375 / SS120) protein is ATP-dependent Clp protease proteolytic subunit 1.